Here is a 314-residue protein sequence, read N- to C-terminus: R2-like ligand binding oxidase (314 aa).

Glu68, Glu101, and His104 together coordinate Mn(2+). A cross-link (3-(O4'-tyrosyl)-valine (Val-Tyr)) is located at residues 71-162 (VTEDIQPFMS…AAQVRASVTY (92 aa)). Glu101 contributes to the Fe cation binding site. Fe cation-binding residues include Glu167, Glu202, and His205.

Belongs to the ribonucleoside diphosphate reductase small chain family. R2-like ligand binding oxidase subfamily. Homodimer. Requires Fe cation as cofactor. It depends on Mn(2+) as a cofactor.

In terms of biological role, probable oxidase that might be involved in lipid metabolism. This is R2-like ligand binding oxidase from Mycobacterium bovis (strain ATCC BAA-935 / AF2122/97).